We begin with the raw amino-acid sequence, 91 residues long: Acylphosphatase (91 aa).

An Acylphosphatase-like domain is found at 3 to 91; sequence KLRMNVQGRV…EETEQFKVIQ (89 aa). Active-site residues include Arg18 and Asn36.

Belongs to the acylphosphatase family.

It catalyses the reaction an acyl phosphate + H2O = a carboxylate + phosphate + H(+). This chain is Acylphosphatase (acyP), found in Enterococcus faecalis (strain ATCC 700802 / V583).